Here is a 255-residue protein sequence, read N- to C-terminus: Protein BEAN1 (255 aa).

Residues 37-57 form a helical membrane-spanning segment; it reads VLVASAVIGVVITLSCITIIV. Residues 69-90 show a composition bias toward basic residues; that stretch reads QRHHHRHRRHHHHHRHRRRRHR. 2 disordered regions span residues 69 to 109 and 160 to 255; these read QRHH…MPYA and DAPP…ERIV. Residues 193–206 are compositionally biased toward polar residues; that stretch reads QRTQGQSRLHTVSM. The segment covering 217–226 has biased composition (low complexity); the sequence is GTGSPSDLLP. Residues 234–243 are compositionally biased toward polar residues; sequence PSNSQGSPIP. Over residues 244-255 the composition is skewed to pro residues; that stretch reads TQAPMPSPERIV.

As to quaternary structure, interacts with NEDD4.

The protein localises to the membrane. This chain is Protein BEAN1 (Bean1), found in Mus musculus (Mouse).